The following is a 399-amino-acid chain: Flavohemoprotein (399 aa).

Positions 1 to 138 constitute a Globin domain; that stretch reads MLAEKTRSII…IADIFITVEK (138 aa). Thr-22 carries the phosphothreonine modification. Heme b is bound at residue His-85. Active-site charge relay system residues include Tyr-95 and Glu-137. Residues 146–399 form a reductase region; the sequence is WPGWKPFDIT…FGPKMSTVQV (254 aa). The 118-residue stretch at 147–264 folds into the FAD-binding FR-type domain; that stretch reads PGWKPFDITA…SAPAGDFAIN (118 aa). Residues Tyr-189 and 207–210 each bind FAD; that span reads RHYS. Residue 281-286 participates in NADP(+) binding; it reads GVGVTP. FAD is bound at residue 389-392; sequence PFGP.

The protein belongs to the globin family. Two-domain flavohemoproteins subfamily. In the C-terminal section; belongs to the flavoprotein pyridine nucleotide cytochrome reductase family. Requires FAD as cofactor. It depends on heme b as a cofactor.

The protein localises to the cytoplasm. The enzyme catalyses 2 nitric oxide + NADPH + 2 O2 = 2 nitrate + NADP(+) + H(+). It catalyses the reaction 2 nitric oxide + NADH + 2 O2 = 2 nitrate + NAD(+) + H(+). In terms of biological role, is involved in NO detoxification in an aerobic process, termed nitric oxide dioxygenase (NOD) reaction that utilizes O(2) and NAD(P)H to convert NO to nitrate, which protects the fungus from various noxious nitrogen compounds. Therefore, plays a central role in the inducible response to nitrosative stress. In the presence of oxygen and NADH, it has NADH oxidase activity, which leads to the generation of superoxide and H(2)O(2). Under anaerobic conditions, it also exhibits nitric oxide reductase and FAD reductase activities. However, all these reactions are much lower than NOD activity. The polypeptide is Flavohemoprotein (YHB1) (Saccharomyces cerevisiae (strain ATCC 204508 / S288c) (Baker's yeast)).